We begin with the raw amino-acid sequence, 243 residues long: MSATDRYSHQLLYATVRQRLLDDIAQGVYQAGQQIPTENELCTQYNVSRITIRKAISDLVADGVLIRWQGKGTFVQSQKVENALLTVSGFTDFGVSQGKSTKEKVIEQERVSAAPFCEKLNIPGNSEVFHLCRVMYLDKEPLFIDSSWIPLSRYPDFDEIYVEGSSTYQLFQERFDTRVVSDKKTIDIFAATRPQAKWLKCELGEPLFRISKIAFDQNDKPVHVSELFCRANRITLTIDNKRH.

The region spanning 10 to 78 (QLLYATVRQR…QGKGTFVQSQ (69 aa)) is the HTH gntR-type domain. Positions 38–57 (ENELCTQYNVSRITIRKAIS) form a DNA-binding region, H-T-H motif.

The protein operates within carbohydrate metabolism; fructoselysine degradation [regulation]. In terms of biological role, may regulate the transcription of the frlABCDR operon, involved in the utilization of fructoselysine and psicoselysine. In Shigella flexneri, this protein is Probable fructoselysine utilization operon transcriptional repressor (frlR).